We begin with the raw amino-acid sequence, 319 residues long: MKRIGVLTSGGDSPGMNAAVRAVVRKAIYHDVEVYGIYNGYAGLISGKIEKLELGSVGDIIHRGGTKLYTARCPEFKTVEGREKGIANLKKLGIEGLVVIGGDGSYMGAKKLTEHGFPCVGVPGTIDNDIPGTDFTIGFDTALNTVIDAIDKIRDTATSHERTYVIEVMGRHAGDIALWAGLAGGAESILIPEADYDMHEIIARLKRGHERGKKHSIIIVAEGVGSGVEFGKRIEEETNLETRVSVLGHIQRGGSPSAADRVLASRLGAYAVELLLEGKGGRCVGIQNNKLVDHDIIEILETKHTVEQNMYQLSKELSI.

G11 is an ATP binding site. 21–25 (RAVVR) lines the ADP pocket. ATP is bound by residues 72–73 (RC) and 102–105 (GDGS). D103 serves as a coordination point for Mg(2+). 125–127 (TID) serves as a coordination point for substrate. The active-site Proton acceptor is D127. R154 contributes to the ADP binding site. Substrate contacts are provided by residues R162 and 169-171 (MGR). Residues 185–187 (GAE), R211, and 213–215 (KKH) each bind ADP. Substrate is bound by residues E222, R243, and 249-252 (HIQR).

The protein belongs to the phosphofructokinase type A (PFKA) family. ATP-dependent PFK group I subfamily. Prokaryotic clade 'B1' sub-subfamily. Homotetramer. Component of a possible RNA degradosome complex composed of rny, rnjA, rnjB, pnp, pfkA and eno (although rnjA and rnjB's presence is unclear). Specifically interacts with RNase Y (rny, PubMed:21803996) and enolase (eno, PubMed:22198292). Interacts with BrxC. Mg(2+) serves as cofactor.

Its subcellular location is the cytoplasm. The catalysed reaction is beta-D-fructose 6-phosphate + ATP = beta-D-fructose 1,6-bisphosphate + ADP + H(+). It functions in the pathway carbohydrate degradation; glycolysis; D-glyceraldehyde 3-phosphate and glycerone phosphate from D-glucose: step 3/4. Its activity is regulated as follows. Allosterically activated by ADP and other diphosphonucleosides, and allosterically inhibited by phosphoenolpyruvate. Its function is as follows. Catalyzes the phosphorylation of D-fructose 6-phosphate to fructose 1,6-bisphosphate by ATP, the first committing step of glycolysis. This Bacillus subtilis (strain 168) protein is ATP-dependent 6-phosphofructokinase.